Here is a 634-residue protein sequence, read N- to C-terminus: Chaperone protein HtpG (634 aa).

Residues 1 to 344 form an a; substrate-binding region; sequence MSETATQNKE…SNDLPLNVSR (344 aa). Positions 345–561 are b; the sequence is EILQDNKVTQ…DFEMGTQMAK (217 aa). The c stretch occupies residues 562-634; that stretch reads LLEAAGQAAP…GAINELLTKR (73 aa).

It belongs to the heat shock protein 90 family. In terms of assembly, homodimer.

The protein resides in the cytoplasm. Molecular chaperone. Has ATPase activity. This chain is Chaperone protein HtpG, found in Vibrio atlanticus (strain LGP32) (Vibrio splendidus (strain Mel32)).